The primary structure comprises 104 residues: Large ribosomal subunit protein bL21c (104 aa).

Belongs to the bacterial ribosomal protein bL21 family. As to quaternary structure, part of the 50S ribosomal subunit.

The protein localises to the plastid. The protein resides in the chloroplast. This protein binds to 23S rRNA. The polypeptide is Large ribosomal subunit protein bL21c (Pyropia yezoensis (Susabi-nori)).